A 79-amino-acid polypeptide reads, in one-letter code: Small ribosomal subunit protein bS18 (79 aa).

This sequence belongs to the bacterial ribosomal protein bS18 family. Part of the 30S ribosomal subunit. Forms a tight heterodimer with protein bS6.

Binds as a heterodimer with protein bS6 to the central domain of the 16S rRNA, where it helps stabilize the platform of the 30S subunit. This is Small ribosomal subunit protein bS18 from Onion yellows phytoplasma (strain OY-M).